Consider the following 304-residue polypeptide: Probable porphobilinogen deaminase (304 aa).

Position 240 is an S-(dipyrrolylmethanemethyl)cysteine (Cys-240).

Belongs to the HMBS family. Dipyrromethane serves as cofactor.

It catalyses the reaction 4 porphobilinogen + H2O = hydroxymethylbilane + 4 NH4(+). It participates in porphyrin-containing compound metabolism; protoporphyrin-IX biosynthesis; coproporphyrinogen-III from 5-aminolevulinate: step 2/4. Its function is as follows. Tetrapolymerization of the monopyrrole PBG into the hydroxymethylbilane pre-uroporphyrinogen in several discrete steps. This is Probable porphobilinogen deaminase from Ignicoccus hospitalis (strain KIN4/I / DSM 18386 / JCM 14125).